The primary structure comprises 363 residues: RNA polymerase I-specific transcription initiation factor RRN5 (363 aa).

Residues 301-344 (LSRRDAPPVHQDENQENQENQENQEQDNTASEGESEAERDEIDE) are disordered. Residues 302 to 313 (SRRDAPPVHQDE) show a composition bias toward basic and acidic residues. A compositionally biased stretch (low complexity) spans 317–328 (NQENQENQEQDN). The span at 333–344 (GESEAERDEIDE) shows a compositional bias: acidic residues.

In terms of assembly, component of the UAF (upstream activation factor) complex which consists of UAF30, RRN5, RRN9, RRN10, and histones H3 and H4.

Its subcellular location is the nucleus. It localises to the nucleolus. Its function is as follows. Component of the UAF (upstream activation factor) complex which interacts with the upstream element of the RNA polymerase I promoter and forms a stable preinitiation complex. Together with SPT15/TBP UAF seems to stimulate basal transcription to a fully activated level. This chain is RNA polymerase I-specific transcription initiation factor RRN5 (RRN5), found in Saccharomyces cerevisiae (strain ATCC 204508 / S288c) (Baker's yeast).